The chain runs to 304 residues: Protease HtpX homolog (304 aa).

Transmembrane regions (helical) follow at residues 14 to 34 (VFIV…IGII) and 39 to 59 (YLNG…IMVM). Residue His144 participates in Zn(2+) binding. Glu145 is an active-site residue. Zn(2+) is bound at residue His148. The next 2 membrane-spanning stretches (helical) occupy residues 161 to 181 (IALV…IFWG) and 202 to 222 (LIIY…ATAI). Glu231 serves as a coordination point for Zn(2+). Residues 276 to 295 (SPLKSKKDKPGIFDSHPPIS) form a disordered region.

The protein belongs to the peptidase M48B family. It depends on Zn(2+) as a cofactor.

Its subcellular location is the cell membrane. The sequence is that of Protease HtpX homolog from Listeria welshimeri serovar 6b (strain ATCC 35897 / DSM 20650 / CCUG 15529 / CIP 8149 / NCTC 11857 / SLCC 5334 / V8).